We begin with the raw amino-acid sequence, 439 residues long: Glutamyl-tRNA(Gln) amidotransferase subunit D (439 aa).

Positions glycine 88–asparagine 419 constitute an Asparaginase/glutaminase domain. Catalysis depends on residues threonine 98, threonine 174, aspartate 175, and lysine 253.

This sequence belongs to the asparaginase 1 family. GatD subfamily. In terms of assembly, heterodimer of GatD and GatE.

It carries out the reaction L-glutamyl-tRNA(Gln) + L-glutamine + ATP + H2O = L-glutaminyl-tRNA(Gln) + L-glutamate + ADP + phosphate + H(+). Its function is as follows. Allows the formation of correctly charged Gln-tRNA(Gln) through the transamidation of misacylated Glu-tRNA(Gln) in organisms which lack glutaminyl-tRNA synthetase. The reaction takes place in the presence of glutamine and ATP through an activated gamma-phospho-Glu-tRNA(Gln). The GatDE system is specific for glutamate and does not act on aspartate. The chain is Glutamyl-tRNA(Gln) amidotransferase subunit D from Metallosphaera sedula (strain ATCC 51363 / DSM 5348 / JCM 9185 / NBRC 15509 / TH2).